The chain runs to 326 residues: ELAV-like protein 1 (326 aa).

Position 2 is an N-acetylserine (Ser-2). Ser-2 is subject to Phosphoserine. Residues 20-98 form the RRM 1 domain; it reads TNLIVNYLPQ…KTIKVSYARP (79 aa). Ser-100 and Ser-158 each carry phosphoserine. An RRM 2 domain is found at 106–186; that stretch reads ANLYISGLPR…EPITVKFAAN (81 aa). Lys-191 is covalently cross-linked (Glycyl lysine isopeptide (Lys-Gly) (interchain with G-Cter in SUMO2)). Ser-197 and Ser-202 each carry phosphoserine. An Omega-N-methylarginine modification is found at Arg-206. Arg-217 bears the Asymmetric dimethylarginine; by CARM1; alternate mark. Arg-217 is subject to Omega-N-methylarginine; alternate. Phosphoserine is present on residues Ser-221 and Ser-318. Residues 244–322 enclose the RRM 3 domain; the sequence is WCIFIYNLGQ…KILQVSFKTN (79 aa).

The protein belongs to the RRM elav family. Monomer and homodimer (in vitro). Interacts with ANP32A. Interacts with ZNF385A; the interaction is indirect and mRNA-dependent and may regulate p53/TP53 expression. Identified in a mRNP complex, at least composed of DHX9, DDX3X, ELAVL1, HNRNPU, IGF2BP1, ILF3, PABPC1, PCBP2, PTBP2, STAU1, STAU2, SYNCRIP and YBX1. Interacts with AGO1 and AGO2. Interacts with IGF2BP1; the interaction is enhanced by SEPIN14P20 peptide RBPR. Interacts with IGF2BP2 and IGF2BP3. Interacts with HNRNPL. Interacts with DHX36; this interaction occurs in a RNA-dependent manner. Interacts with ILF3; this interaction occurs in a RNA-dependent manner. Interacts with PLEKHN1. Interacts with SHFL; the interaction increases in presence of RNA. Interacts with YBX1; interaction recruits ELAVL1 on C5-methylcytosine (m5C)-containing mRNAs, thereby promoting mRNA stability. Interacts with FXR1. Post-translationally, phosphorylated by MAPKAPK2. Phosphorylated by PRKCD. In terms of processing, methylated at Arg-217 by CARM1 in macrophages in response to LPS challenge. In terms of tissue distribution, ubiquitous. Detected in brain, liver, thymus and muscle.

It localises to the cytoplasm. The protein localises to the nucleus. It is found in the stress granule. The protein resides in the P-body. Its function is as follows. RNA-binding protein that binds to the 3'-UTR region of mRNAs and increases their stability. Involved in embryonic stem cell (ESC) differentiation: preferentially binds mRNAs that are not methylated by N6-methyladenosine (m6A), stabilizing them, promoting ESC differentiation. Has also been shown to be capable of binding to m6A-containing mRNAs and contributes to MYC stability by binding to m6A-containing MYC mRNAs. Binds to poly-U elements and AU-rich elements (AREs) in the 3'-UTR of target mRNAs. Binds avidly to the AU-rich element in FOS and IL3/interleukin-3 mRNAs. In the case of the FOS AU-rich element, binds to a core element of 27 nucleotides that contain AUUUA, AUUUUA, and AUUUUUA motifs. Binds preferentially to the 5'-UUUU[AG]UUU-3' motif in vitro. With ZNF385A, binds the 3'-UTR of p53/TP53 mRNA to control their nuclear export induced by CDKN2A. Hence, may regulate p53/TP53 expression and mediate in part the CDKN2A anti-proliferative activity. May also bind with ZNF385A the CCNB1 mRNA. Increases the stability of the leptin mRNA harboring an AU-rich element (ARE) in its 3' UTR. The protein is ELAV-like protein 1 (ELAVL1) of Homo sapiens (Human).